The chain runs to 182 residues: Trypsin inhibitor 2 (182 aa).

Pyrrolidone carboxylic acid is present on Gln-1. Cystine bridges form between Cys-40/Cys-84 and Cys-136/Cys-147.

The protein belongs to the protease inhibitor I3 (leguminous Kunitz-type inhibitor) family.

This is Trypsin inhibitor 2 from Psophocarpus tetragonolobus (Winged bean).